The chain runs to 275 residues: 2-dehydro-3-deoxyphosphooctonate aldolase (275 aa).

It belongs to the KdsA family.

The protein localises to the cytoplasm. The enzyme catalyses D-arabinose 5-phosphate + phosphoenolpyruvate + H2O = 3-deoxy-alpha-D-manno-2-octulosonate-8-phosphate + phosphate. It participates in carbohydrate biosynthesis; 3-deoxy-D-manno-octulosonate biosynthesis; 3-deoxy-D-manno-octulosonate from D-ribulose 5-phosphate: step 2/3. Its pathway is bacterial outer membrane biogenesis; lipopolysaccharide biosynthesis. The polypeptide is 2-dehydro-3-deoxyphosphooctonate aldolase (Francisella tularensis subsp. mediasiatica (strain FSC147)).